The following is a 246-amino-acid chain: Sortase B (246 aa).

A helical membrane pass occupies residues 5 to 24 (SFLGKSLTLVVLGVFLFSGW).

This sequence belongs to the bacterial sortase family. Class B subfamily.

The protein resides in the cell membrane. Its function is as follows. Transpeptidase that anchors surface proteins to the cell wall. Recognizes and modifies its substrate by proteolytic cleavage of a C-terminal sorting signal. Following cleavage, a covalent intermediate is formed via a thioester bond between the sortase and its substrate, which is then transferred and covalently attached to the cell wall. Catalyzes a cell wall sorting reaction in which a surface protein with the consensus sorting signal NP(Q/K)(T/S)(N/G/S)(D/A) is cleaved between the fourth and fifth residues, and the fourth position is linked to the cell wall. This is not the major sortase in Listeria, it seems to anchor only 2 proteins, Hbp2 (SvpA) and Hbp1. The chain is Sortase B from Listeria monocytogenes serovar 1/2a (strain ATCC BAA-679 / EGD-e).